The sequence spans 282 residues: Thiazole synthase (282 aa).

Catalysis depends on K113, which acts as the Schiff-base intermediate with DXP. 1-deoxy-D-xylulose 5-phosphate-binding positions include G174, 201-202, and 223-224; these read AG and NT.

It belongs to the ThiG family. In terms of assembly, homotetramer. Forms heterodimers with either ThiH or ThiS.

The protein localises to the cytoplasm. It carries out the reaction [ThiS sulfur-carrier protein]-C-terminal-Gly-aminoethanethioate + 2-iminoacetate + 1-deoxy-D-xylulose 5-phosphate = [ThiS sulfur-carrier protein]-C-terminal Gly-Gly + 2-[(2R,5Z)-2-carboxy-4-methylthiazol-5(2H)-ylidene]ethyl phosphate + 2 H2O + H(+). It participates in cofactor biosynthesis; thiamine diphosphate biosynthesis. Functionally, catalyzes the rearrangement of 1-deoxy-D-xylulose 5-phosphate (DXP) to produce the thiazole phosphate moiety of thiamine. Sulfur is provided by the thiocarboxylate moiety of the carrier protein ThiS. In vitro, sulfur can be provided by H(2)S. The chain is Thiazole synthase from Cupriavidus metallidurans (strain ATCC 43123 / DSM 2839 / NBRC 102507 / CH34) (Ralstonia metallidurans).